The chain runs to 206 residues: LexA repressor (206 aa).

A DNA-binding region (H-T-H motif) is located at residues 28–48 (VREIGQAVGLASSSTVHGHLS). Active-site for autocatalytic cleavage activity residues include S128 and K166.

This sequence belongs to the peptidase S24 family. Homodimer.

It carries out the reaction Hydrolysis of Ala-|-Gly bond in repressor LexA.. In terms of biological role, represses a number of genes involved in the response to DNA damage (SOS response), including recA and lexA. In the presence of single-stranded DNA, RecA interacts with LexA causing an autocatalytic cleavage which disrupts the DNA-binding part of LexA, leading to derepression of the SOS regulon and eventually DNA repair. In Bacillus thuringiensis (strain Al Hakam), this protein is LexA repressor.